A 735-amino-acid chain; its full sequence is Muskelin (735 aa).

Ala-2 bears the N-acetylalanine mark. The LisH domain occupies Arg-172–Leu-204. Residues His-206–Ser-258 form the CTLH domain. Kelch repeat units lie at residues Thr-284–Lys-330, Gln-339–Gln-391, Met-400–Gly-458, Cys-469–Thr-515, Glu-526–Glu-578, and Val-597–Asp-651.

In terms of assembly, homodimer; may form higher oligomers. Identified in the CTLH complex that contains GID4, RANBP9 and/or RANBP10, MKLN1, MAEA, RMND5A (or alternatively its paralog RMND5B), GID8, ARMC8, WDR26 and YPEL5. Within this complex, MAEA, RMND5A (or alternatively its paralog RMND5B), GID8, WDR26, and RANBP9 and/or RANBP10 form the catalytic core, while GID4, MKLN1, ARMC8 and YPEL5 have ancillary roles. Interacts with RANBP9. Part of a complex consisting of RANBP9, MKLN1 and GID8. Interacts with GABRA1. Interacts with the C-terminal tail of PTGER3.

Its subcellular location is the cytoplasm. It is found in the cell projection. It localises to the ruffle. The protein localises to the cell cortex. The protein resides in the synapse. Its subcellular location is the postsynapse. Component of the CTLH E3 ubiquitin-protein ligase complex that selectively accepts ubiquitin from UBE2H and mediates ubiquitination and subsequent proteasomal degradation of the transcription factor HBP1. Required for internalization of the GABA receptor GABRA1 from the cell membrane via endosomes and subsequent GABRA1 degradation. Acts as a mediator of cell spreading and cytoskeletal responses to the extracellular matrix component THBS1. This chain is Muskelin (Mkln1), found in Rattus norvegicus (Rat).